A 246-amino-acid chain; its full sequence is Purine nucleoside phosphorylase ORF3 (246 aa).

His-71, Cys-110, and His-127 together coordinate Zn(2+).

Belongs to the purine nucleoside phosphorylase YfiH/LACC1 family. In terms of assembly, homodimer. Requires Cu(2+) as cofactor. Zn(2+) is required as a cofactor.

It catalyses the reaction adenosine + phosphate = alpha-D-ribose 1-phosphate + adenine. The enzyme catalyses S-methyl-5'-thioadenosine + phosphate = 5-(methylsulfanyl)-alpha-D-ribose 1-phosphate + adenine. The catalysed reaction is inosine + phosphate = alpha-D-ribose 1-phosphate + hypoxanthine. It carries out the reaction adenosine + H2O + H(+) = inosine + NH4(+). Its function is as follows. Purine nucleoside enzyme that catalyzes the phosphorolysis of adenosine and inosine nucleosides, yielding D-ribose 1-phosphate and the respective free bases, adenine and hypoxanthine. Also catalyzes the phosphorolysis of S-methyl-5'-thioadenosine into adenine and S-methyl-5-thio-alpha-D-ribose 1-phosphate. Also has adenosine deaminase activity. The protein is Purine nucleoside phosphorylase ORF3 of Streptomyces griseus.